Here is a 197-residue protein sequence, read N- to C-terminus: Large ribosomal subunit protein uL10 (197 aa).

Residues 163–197 form a disordered region; sequence GAPAAAEAPAAEESADSAAEAAAEAPAEAPAAEEN.

The protein belongs to the universal ribosomal protein uL10 family. In terms of assembly, part of the ribosomal stalk of the 50S ribosomal subunit. The N-terminus interacts with L11 and the large rRNA to form the base of the stalk. The C-terminus forms an elongated spine to which L12 dimers bind in a sequential fashion forming a multimeric L10(L12)X complex.

Functionally, forms part of the ribosomal stalk, playing a central role in the interaction of the ribosome with GTP-bound translation factors. The polypeptide is Large ribosomal subunit protein uL10 (Pseudarthrobacter chlorophenolicus (strain ATCC 700700 / DSM 12829 / CIP 107037 / JCM 12360 / KCTC 9906 / NCIMB 13794 / A6) (Arthrobacter chlorophenolicus)).